Reading from the N-terminus, the 540-residue chain is Growth factor receptor-bound protein 14 (540 aa).

Residues Met1–Ala23 are disordered. Thr2 carries the N-acetylthreonine modification. Positions Lys106–Ala192 constitute a Ras-associating domain. Residues Tyr234–Tyr342 form the PH domain. Residues Ser372 and Ser375 each carry the phosphoserine modification. Residues Trp439–Cys535 form the SH2 domain.

The protein belongs to the GRB7/10/14 family. In terms of assembly, interacts with the cytoplasmic domain of the autophosphorylated insulin receptor, through the SH2 domain. Interacts with GRB14 (via BPS domain); this interaction protects the tyrosines in the activation loop on INSR from dephosphorylation. Binds to the ankyrin repeat region of TNKS2 via its N-terminus. Interacts with activated NRAS. Interacts (via SH2 domain) with TEK/TIE2 (tyrosine phosphorylated). Post-translationally, phosphorylated on serine residues. Phosphorylated on tyrosine residues by TEK/TIE2.

It localises to the cytoplasm. The protein localises to the endosome membrane. Functionally, adapter protein which modulates coupling of cell surface receptor kinases with specific signaling pathways. Binds to, and suppresses signals from, the activated insulin receptor (INSR). Potent inhibitor of insulin-stimulated MAPK3 phosphorylation. Plays a critical role regulating PDPK1 membrane translocation in response to insulin stimulation and serves as an adapter protein to recruit PDPK1 to activated insulin receptor, thus promoting PKB/AKT1 phosphorylation and transduction of the insulin signal. This is Growth factor receptor-bound protein 14 (GRB14) from Bos taurus (Bovine).